Consider the following 289-residue polypeptide: Oxaloacetate decarboxylase 1 (289 aa).

Serine 50 contacts substrate. A Mg(2+)-binding site is contributed by aspartate 88. Residues arginine 159 and histidine 235 each contribute to the substrate site.

It belongs to the isocitrate lyase/PEP mutase superfamily. Oxaloacetate decarboxylase family. As to quaternary structure, homotetramer; dimer of dimers. The cofactor is Mg(2+).

The enzyme catalyses oxaloacetate + H(+) = pyruvate + CO2. In terms of biological role, catalyzes the decarboxylation of oxaloacetate into pyruvate. Seems to play a role in maintaining cellular concentrations of bicarbonate and pyruvate. In Pseudomonas putida (strain W619), this protein is Oxaloacetate decarboxylase 1.